Here is a 5634-residue protein sequence, read N- to C-terminus: Hemicentin-1 (5634 aa).

A signal peptide spans 1-21 (MIAQEVVHTVFLVALFRSSLA). Positions 41–216 (TLAFVFDVTG…EVLKWVEEAV (176 aa)) constitute a VWFA domain. 29 consecutive Ig-like C2-type domains span residues 431 to 517 (PKVT…FDVS), 520 to 607 (PPII…VFLT), 612 to 697 (PKVT…STLR), 702 to 788 (PKLV…LTLD), 793 to 883 (PVFI…TTVT), 890 to 976 (PLIG…TSVA), 981 to 1067 (PSIQ…VQLT), 1072 to 1166 (PRVF…VKLS), 1171 to 1254 (PKIQ…AEVT), 1261 to 1353 (PSVE…YNLK), 1357 to 1446 (PPVI…FSVN), 1451 to 1540 (PSIL…IKLT), 1545 to 1633 (PSIK…FHVD), 1638 to 1723 (PTIE…REIK), 1732 to 1820 (PAVE…FEVT), 1825 to 1913 (PTIK…TQLH), 1918 to 2006 (PSLD…YSLQ), 2011 to 2096 (PSIS…RDID), 2103 to 2189 (PNIM…YNVN), 2194 to 2284 (PSIY…YNLQ), 2289 to 2378 (PSIT…YDLS), 2383 to 2472 (PSII…FGLS), 2477 to 2565 (PHIV…FRLN), 2570 to 2661 (PTIA…YEVK), 2665 to 2762 (PPII…VNIQ), 2765 to 2863 (PSFQ…YDVH), 2867 to 2958 (PPVI…FNLN), 2962 to 3050 (PPSV…VSLT), and 3055 to 3145 (PSIK…FHLN). 2 disulfide bridges follow: Cys-451-Cys-499 and Cys-541-Cys-591. O-linked (GalNAc...) threonine glycosylation occurs at Thr-615. 11 disulfide bridges follow: Cys-633–Cys-681, Cys-723–Cys-772, Cys-814–Cys-867, Cys-911–Cys-960, Cys-1002–Cys-1051, Cys-1101–Cys-1150, Cys-1192–Cys-1240, Cys-1287–Cys-1337, Cys-1381–Cys-1430, Cys-1474–Cys-1524, and Cys-1568–Cys-1617. O-linked (GalNAc...) threonine glycosylation is found at Thr-1292 and Thr-1386. O-linked (GalNAc...) threonine glycosylation occurs at Thr-1639. 2 cysteine pairs are disulfide-bonded: Cys-1662/Cys-1711 and Cys-1755/Cys-1804. Thr-1826 carries an O-linked (GalNAc...) threonine glycan. 14 disulfides stabilise this stretch: Cys-1847–Cys-1897, Cys-1941–Cys-1990, Cys-2032–Cys-2082, Cys-2124–Cys-2173, Cys-2217–Cys-2268, Cys-2313–Cys-2362, Cys-2407–Cys-2456, Cys-2500–Cys-2549, Cys-2596–Cys-2645, Cys-2695–Cys-2744, Cys-2798–Cys-2847, Cys-2893–Cys-2942, Cys-2985–Cys-3034, and Cys-3080–Cys-3129. An O-linked (GalNAc...) threonine glycan is attached at Thr-3151. Ig-like C2-type domains follow at residues 3155–3227 (PETE…VASN), 3244–3334 (PSVA…FNLN), 3339–3428 (PKIR…YSLQ), 3433–3515 (PNMD…GEVS), 3526–3614 (PHIN…YLVR), 3619–3707 (PNIA…FNLT), 3712–3798 (PSIG…IDLQ), 3803–3891 (PSIA…VDLT), 3896–3982 (PTIA…VTLR), 3987–4073 (PVIQ…VKLN), 4077–4163 (PPVI…STLT), 4168–4252 (PRIQ…RIVT), 4259–4332 (PTFT…AENS), 4347–4434 (PPVF…MSLT), and 4439–4526 (PIIT…VIVQ). 8 disulfide bridges follow: Cys-3172–Cys-3223, Cys-3267–Cys-3318, Cys-3363–Cys-3412, Cys-3456–Cys-3505, Cys-3549–Cys-3598, Cys-3642–Cys-3691, Cys-3733–Cys-3782, and Cys-3824–Cys-3875. An O-linked (GalNAc...) threonine glycan is attached at Thr-3897. 25 disulfide bridges follow: Cys-3917-Cys-3966, Cys-4008-Cys-4057, Cys-4099-Cys-4147, Cys-4189-Cys-4238, Cys-4280-Cys-4327, Cys-4370-Cys-4418, Cys-4460-Cys-4508, Cys-4540-Cys-4577, Cys-4544-Cys-4582, Cys-4555-Cys-4567, Cys-4597-Cys-4634, Cys-4601-Cys-4639, Cys-4612-Cys-4624, Cys-4654-Cys-4691, Cys-4658-Cys-4696, Cys-4669-Cys-4681, Cys-4711-Cys-4748, Cys-4715-Cys-4753, Cys-4726-Cys-4738, Cys-4768-Cys-4805, Cys-4772-Cys-4810, Cys-4783-Cys-4795, Cys-4825-Cys-4862, Cys-4829-Cys-4867, and Cys-4840-Cys-4852. The O-linked (GalNAc...) threonine glycan is linked to Thr-4379. 6 TSP type-1 domains span residues 4528–4583 (HGGF…KLCP), 4585–4640 (DGHW…RPCP), 4642–4697 (HGVW…RHCP), 4699–4754 (DGRW…DPCP), 4756–4811 (HGNW…DMCP), and 4813–4868 (DGSW…QACP). Positions 4870–5092 (GPQRARGSVI…SKGDRSNQCP (223 aa)) constitute a Nidogen G2 beta-barrel domain. Residues 5106–5145 (DEDECTAGNPCSHTCHNAIGAYYCSCPKGLTIAADGRTCQ) enclose the EGF-like 1; calcium-binding domain. Intrachain disulfides connect Cys-5110–Cys-5120, Cys-5116–Cys-5129, and Cys-5131–Cys-5144. Residues 5146–5189 (DIDECALGGHTCRAGQDCDNTIGSYRCVVHCGTGFRRTSDGLSC) form the EGF-like 2; calcium-binding domain. Positions 5191–5228 (DINECQESSPCHQRCFNVIGSFHCGCEAGYQLKGRKCI) constitute an EGF-like 3; calcium-binding domain. 3 disulfide bridges follow: Cys-5195-Cys-5205, Cys-5201-Cys-5214, and Cys-5216-Cys-5227. In terms of domain architecture, EGF-like 4; calcium-binding spans 5229–5269 (DVNECRQNVCRPDQHCKNTRGGYKCIDLCPSGMTKAENGTC). In terms of domain architecture, EGF-like 5; calcium-binding spans 5271-5306 (DIDECKDGTHQCRYNQICENTRGSYRCACPRGYRSQ). 8 disulfides stabilise this stretch: Cys-5275-Cys-5288, Cys-5282-Cys-5297, Cys-5318-Cys-5329, Cys-5325-Cys-5338, Cys-5340-Cys-5353, Cys-5435-Cys-5445, Cys-5441-Cys-5454, and Cys-5456-Cys-5469. Residues 5314 to 5354 (DINECEQVPKPCAHQCSNSPGSFKCICLPGQQLLGDGKSCA) enclose the EGF-like 6; calcium-binding domain. Residues 5431–5470 (DIDECQNRDTCQHECKNTIGSYQCVCPPGYRLMLNGKTCQ) enclose the EGF-like 7; calcium-binding domain.

As to expression, in the kidney, expressed in the glomerulus (at protein level). Expressed in whisker and hair follicles, eye, tongue, and splenic and lymph node conduits (at protein level). In the embryo, localizes to the cleavage furrow at the two-cell stage (at protein level). In neonatal skin, expressed throughout the dermis (at protein level). In adult skin, strongly concentrated at the dermal side of the basement membrane but not detectable in the deeper dermis. Shows tendon-specific localization at the myotendinous junction and is also detected in the perichondrium (at protein level). Expressed by chondrocytes residing in articular cartilage and the femoral growth plate of 52 week old mice (at protein level). Expressed in vascular endothelial cells in coronary arteries and sparsely in endocardial endothelium (at protein level). Expressed in skin, tongue, lung and eye. At 14.5 dpc, expressed in the vibrissae, dermis, forelimb, kidney, intestine, lung and iliac cartilage where expression is found mainly in mesenchymal cells.

It is found in the secreted. The protein localises to the extracellular space. It localises to the extracellular matrix. Its subcellular location is the basement membrane. The protein resides in the cytoplasm. It is found in the cell junction. The protein localises to the cleavage furrow. Involved in transforming growth factor beta-mediated rearrangement of the podocyte cytoskeleton which includes reduction of F-actin fibers and broadening, flattening and elongation of podocytes. Plays a role in basement membrane organization. May promote cleavage furrow maturation during cytokinesis in preimplantation embryos. May play a role in the architecture of adhesive and flexible epithelial cell junctions. May play a role during myocardial remodeling by imparting an effect on cardiac fibroblast migration. This chain is Hemicentin-1, found in Mus musculus (Mouse).